Here is a 379-residue protein sequence, read N- to C-terminus: Leukocyte elastase inhibitor (379 aa).

At M1 the chain carries N-acetylmethionine. N6-acetyllysine occurs at positions 137 and 177. A CARD-binding motif (CBM) region spans residues 351-379 (NFNADHPFIFFIRHNPSANILFLGRFSSP).

This sequence belongs to the serpin family. Ov-serpin subfamily. In terms of assembly, monomer. Interacts (via C-terminus) with CASP1; CASP4 (via CARD domain) and CASP5; these interactions regulate the activity of inflammatory caspases. Interacts with PRTN3. Interacts with GZMH. Interacts with TMSB4. In terms of processing, the N-terminus is blocked.

The protein resides in the secreted. The protein localises to the cytoplasm. Its subcellular location is the cytolytic granule. It localises to the early endosome. In terms of biological role, neutrophil serine protease inhibitor that plays an essential role in the regulation of the innate immune response, inflammation and cellular homeostasis. Acts primarily to protect the cell from proteases released in the cytoplasm during stress or infection. These proteases are important in killing microbes but when released from granules, these potent enzymes also destroy host proteins and contribute to mortality. Regulates the activity of the neutrophil proteases elastase, cathepsin G, proteinase-3, chymase, chymotrypsin, and kallikrein-3. Also acts as a potent intracellular inhibitor of GZMH by directly blocking its proteolytic activity. During inflammation, limits the activity of inflammatory caspases CASP1, CASP4 and CASP5 by suppressing their caspase-recruitment domain (CARD) oligomerization and enzymatic activation. When secreted, promotes the proliferation of beta-cells via its protease inhibitory function. This Equus caballus (Horse) protein is Leukocyte elastase inhibitor (SERPINB1).